We begin with the raw amino-acid sequence, 504 residues long: Anaerobic nitric oxide reductase transcription regulator NorR (504 aa).

The residue at position 57 (aspartate 57) is a 4-aspartylphosphate. One can recognise a Sigma-54 factor interaction domain in the interval 187-416; the sequence is MIGLSPGMTQ…LEHAIHRAVV (230 aa). ATP is bound by residues 215 to 222 and 278 to 287; these read GETGTGKE and ADNGTLFLDE. Residues 479 to 498 constitute a DNA-binding region (H-T-H motif); that stretch reads WAACARMLETDVANLHRLAK.

It functions in the pathway nitrogen metabolism; nitric oxide reduction. Required for the expression of anaerobic nitric oxide (NO) reductase, acts as a transcriptional activator for at least the norVW operon. Activation also requires sigma-54. The protein is Anaerobic nitric oxide reductase transcription regulator NorR of Escherichia coli O17:K52:H18 (strain UMN026 / ExPEC).